The chain runs to 501 residues: ATP-dependent rRNA helicase RRP3 (501 aa).

The stretch at 3 to 44 (KIVKRKEKKANDELTSLAEKIRAKALENQKKLIEAEKEGGSE) forms a coiled coil. The segment at 36-79 (EAEKEGGSESDSEEDATAEKKKVLKSKSKSTVSTQNENTNEDES) is disordered. Phosphoserine occurs at positions 43, 45, and 47. Residues 81-109 (ESFSELNLVPELIQACKNLNYSKPTPIQS) carry the Q motif motif. The Helicase ATP-binding domain maps to 112-284 (IPPALEGHDI…RASLTNPVKC (173 aa)). 125–132 (AQTGSGKT) is a binding site for ATP. The DEAD box signature appears at 231–234 (DEAD). In terms of domain architecture, Helicase C-terminal spans 307–461 (LKNTYLIYLL…NIILTLRDSV (155 aa)). Residues 480–501 (IARGKGRRGRMMTRENMDMGER) are disordered. Residues 491-501 (MTRENMDMGER) show a composition bias toward basic and acidic residues.

The protein belongs to the DEAD box helicase family. DDX47/RRP3 subfamily. In terms of assembly, interacts with the SSU processome.

It localises to the nucleus. The catalysed reaction is ATP + H2O = ADP + phosphate + H(+). Functionally, ATP-dependent rRNA helicase required for pre-ribosomal RNA processing. Involved in the maturation of the 35S-pre-rRNA and to its cleavage to mature 18S rRNA. The sequence is that of ATP-dependent rRNA helicase RRP3 from Saccharomyces cerevisiae (strain YJM789) (Baker's yeast).